Consider the following 494-residue polypeptide: UPF0371 protein SP_0341 (494 aa).

The protein belongs to the UPF0371 family.

This chain is UPF0371 protein SP_0341, found in Streptococcus pneumoniae serotype 4 (strain ATCC BAA-334 / TIGR4).